The following is a 718-amino-acid chain: F-box/LRR-repeat protein 18 (718 aa).

Residues glycine 25 to valine 72 enclose the F-box domain. 12 LRR repeats span residues aspartate 77–glycine 103, cysteine 104–glycine 128, cysteine 129–valine 153, lysine 177–phenylalanine 201, cysteine 324–glycine 352, glutamate 367–alanine 392, alanine 393–valine 422, cysteine 468–glycine 492, alanine 516–glutamine 540, proline 542–asparagine 567, glycine 572–glutamine 597, and tyrosine 599–serine 623.

Directly interacts with SKP1 and CUL1.

Functionally, substrate-recognition component of the SCF (SKP1-CUL1-F-box protein)-type E3 ubiquitin ligase complex. The polypeptide is F-box/LRR-repeat protein 18 (FBXL18) (Homo sapiens (Human)).